The chain runs to 328 residues: Biotin synthase (328 aa).

The Radical SAM core domain occupies 50-277 (FGDQVHLCCI…GKEIVICGGR (228 aa)). [4Fe-4S] cluster-binding residues include Cys67, Cys71, and Cys74. The [2Fe-2S] cluster site is built by Ser111, Cys142, and Cys202.

Belongs to the radical SAM superfamily. Biotin synthase family. As to quaternary structure, homodimer. [4Fe-4S] cluster serves as cofactor. Requires [2Fe-2S] cluster as cofactor.

The catalysed reaction is (4R,5S)-dethiobiotin + (sulfur carrier)-SH + 2 reduced [2Fe-2S]-[ferredoxin] + 2 S-adenosyl-L-methionine = (sulfur carrier)-H + biotin + 2 5'-deoxyadenosine + 2 L-methionine + 2 oxidized [2Fe-2S]-[ferredoxin]. It functions in the pathway cofactor biosynthesis; biotin biosynthesis; biotin from 7,8-diaminononanoate: step 2/2. Catalyzes the conversion of dethiobiotin (DTB) to biotin by the insertion of a sulfur atom into dethiobiotin via a radical-based mechanism. This is Biotin synthase from Desulfatibacillum aliphaticivorans.